Here is a 206-residue protein sequence, read N- to C-terminus: Transmembrane emp24 domain-containing protein bai (206 aa).

An N-terminal signal peptide occupies residues Met1–Gly20. Topologically, residues Val21–Arg172 are lumenal. Positions Gln30–Arg140 constitute a GOLD domain. Residues Val173–Leu193 form a helical membrane-spanning segment. The Cytoplasmic segment spans residues Tyr194–Glu206.

It belongs to the EMP24/GP25L family.

The protein localises to the membrane. Its function is as follows. Eca and bai are essential, though not redundant, for dorsoventral patterning of the embryo. Specifically required during early embryogenesis for the activity of maternal tkv, while the zygotic tkv is not affected. This chain is Transmembrane emp24 domain-containing protein bai, found in Drosophila grimshawi (Hawaiian fruit fly).